The primary structure comprises 1474 residues: Alpha-2-macroglobulin (1474 aa).

The signal sequence occupies residues 1–23 (MGKNKLLHPSLVLLLLVLLPTDA). Cys-48 and Cys-86 are disulfide-bonded. Residues Asn-55, Asn-70, and Asn-247 are each glycosylated (N-linked (GlcNAc...) asparagine). Cystine bridges form between Cys-251/Cys-299 and Cys-269/Cys-287. Residues Asn-396 and Asn-410 are each glycosylated (N-linked (GlcNAc...) asparagine). 8 cysteine pairs are disulfide-bonded: Cys-470/Cys-563, Cys-595/Cys-771, Cys-642/Cys-689, Cys-821/Cys-849, Cys-847/Cys-883, Cys-921/Cys-1321, Cys-1079/Cys-1127, and Cys-1352/Cys-1467. Residues 690–728 (PQLQQYEMHGPEGLRVGFYESDVMGRGHARLVHAEEPPT) are bait region. Isoglutamyl lysine isopeptide (Gln-Lys) (interchain with K-? in other proteins) cross-links involve residues Gln-693 and Gln-694. Inhibitory regions lie at residues 704–709 (RVGFYE), 719–723 (RLVHA), and 730–735 (TVRKYF). A glycan (N-linked (GlcNAc...) asparagine) is linked at Asn-869. The isoglutamyl cysteine thioester (Cys-Gln) cross-link spans 972 to 975 (CGEQ). A glycan (N-linked (GlcNAc...) asparagine) is linked at Asn-991. A glycan (N-linked (GlcNAc...) asparagine) is linked at Asn-1424.

It belongs to the protease inhibitor I39 (alpha-2-macroglobulin) family. As to quaternary structure, homotetramer; disulfide-linked. In terms of tissue distribution, plasma.

The protein resides in the secreted. Is able to inhibit all four classes of proteinases by a unique 'trapping' mechanism. This protein has a peptide stretch, called the 'bait region' which contains specific cleavage sites for different proteinases. When a proteinase cleaves the bait region, a conformational change is induced in the protein which traps the proteinase. The entrapped enzyme remains active against low molecular weight substrates (activity against high molecular weight substrates is greatly reduced). Following cleavage in the bait region a thioester bond is hydrolyzed and mediates the covalent binding of the protein to the proteinase. The protein is Alpha-2-macroglobulin (A2M) of Pongo abelii (Sumatran orangutan).